Reading from the N-terminus, the 128-residue chain is Protein FAM229A (128 aa).

Residues 1-96 (MQSSPSTLGP…VATDQNPVRP (96 aa)) form a disordered region.

It belongs to the FAM229 family.

The protein is Protein FAM229A (Fam229a) of Mus musculus (Mouse).